Here is a 498-residue protein sequence, read N- to C-terminus: Swainsonine transporter swnT (498 aa).

A compositionally biased stretch (basic and acidic residues) spans 1-10 (MSLRNDEQTE). A disordered region spans residues 1–21 (MSLRNDEQTEKGAVVGKVDSQ). Transmembrane regions (helical) follow at residues 42 to 64 (LSAI…VLGT), 79 to 99 (LAMA…ISAI), 126 to 146 (AMIS…AVPV), 167 to 187 (FVVF…EYFL), and 193 to 213 (ALLL…FATA). 2 N-linked (GlcNAc...) asparagine glycosylation sites follow: Asn227 and Asn242. The next 6 helical transmembrane spans lie at 272–292 (LIWT…AVLV), 316–336 (AAAI…VWSI), 370–390 (PIWS…LYLA), 398–418 (LIAT…ILVL), 436–456 (GFMA…FYCF), and 469–489 (YVSA…FLYA).

This sequence belongs to the amino acid-polyamine-organocation (APC) superfamily. Amino acid/choline transporter (ACT) (TC 2.A.3.4) family.

It is found in the membrane. Transmembrane transporter; part of the gene cluster that mediates the biosynthesis of swainsonine, a cytotoxic fungal alkaloid and a potential cancer therapy drug. Does not mediate the secretion of SW and the exact role of swnT in SW biosynthesis remains to be determined. This is Swainsonine transporter swnT from Arthroderma benhamiae (strain ATCC MYA-4681 / CBS 112371) (Trichophyton mentagrophytes).